Reading from the N-terminus, the 243-residue chain is UPF0173 metal-dependent hydrolase Caur_2542 (243 aa).

Belongs to the UPF0173 family.

The sequence is that of UPF0173 metal-dependent hydrolase Caur_2542 from Chloroflexus aurantiacus (strain ATCC 29366 / DSM 635 / J-10-fl).